Here is a 151-residue protein sequence, read N- to C-terminus: Molybdopterin synthase catalytic subunit (151 aa).

Residues 38–40 (KVR), 104–105 (HR), Lys-120, and 127–129 (KRE) each bind substrate.

The protein belongs to the MoaE family. Heterotetramer of 2 MoaD subunits and 2 MoaE subunits. Also stable as homodimer. The enzyme changes between these two forms during catalysis.

It catalyses the reaction 2 [molybdopterin-synthase sulfur-carrier protein]-C-terminal-Gly-aminoethanethioate + cyclic pyranopterin phosphate + H2O = molybdopterin + 2 [molybdopterin-synthase sulfur-carrier protein]-C-terminal Gly-Gly + 2 H(+). Its pathway is cofactor biosynthesis; molybdopterin biosynthesis. Converts molybdopterin precursor Z into molybdopterin. This requires the incorporation of two sulfur atoms into precursor Z to generate a dithiolene group. The sulfur is provided by MoaD. This Yersinia pestis protein is Molybdopterin synthase catalytic subunit (moaE).